The sequence spans 175 residues: ATP synthase subunit delta (175 aa).

It belongs to the ATPase delta chain family. In terms of assembly, F-type ATPases have 2 components, F(1) - the catalytic core - and F(0) - the membrane proton channel. F(1) has five subunits: alpha(3), beta(3), gamma(1), delta(1), epsilon(1). F(0) has three main subunits: a(1), b(2) and c(10-14). The alpha and beta chains form an alternating ring which encloses part of the gamma chain. F(1) is attached to F(0) by a central stalk formed by the gamma and epsilon chains, while a peripheral stalk is formed by the delta and b chains.

Its subcellular location is the cell inner membrane. In terms of biological role, f(1)F(0) ATP synthase produces ATP from ADP in the presence of a proton or sodium gradient. F-type ATPases consist of two structural domains, F(1) containing the extramembraneous catalytic core and F(0) containing the membrane proton channel, linked together by a central stalk and a peripheral stalk. During catalysis, ATP synthesis in the catalytic domain of F(1) is coupled via a rotary mechanism of the central stalk subunits to proton translocation. Its function is as follows. This protein is part of the stalk that links CF(0) to CF(1). It either transmits conformational changes from CF(0) to CF(1) or is implicated in proton conduction. The chain is ATP synthase subunit delta from Xanthomonas campestris pv. campestris (strain 8004).